Reading from the N-terminus, the 396-residue chain is Probable peptidoglycan glycosyltransferase FtsW (396 aa).

The Cytoplasmic portion of the chain corresponds to 1-27; that stretch reads MPFLDKVKQQYEDWTRITPSNLLYDRA. The helical transmembrane segment at 28 to 48 threads the bilayer; sequence LLLLFFVLLLIGLLAVSSASI. Residues 49 to 64 lie on the Periplasmic side of the membrane; that stretch reads PVGTRLFKDPFYFAKR. A helical membrane pass occupies residues 65–85; that stretch reads DAIYVFLSCVTCYLCVQVPME. The Cytoplasmic portion of the chain corresponds to 86–93; that stretch reads KWEQWHVR. A helical transmembrane segment spans residues 94 to 114; it reads LFAFAIFLLILVLIPGIGLSV. Residues 115–122 lie on the Periplasmic side of the membrane; it reads NGARRWIP. The helical transmembrane segment at 123–143 threads the bilayer; that stretch reads MVLFNFQPAEFAKLALTCFLA. Topologically, residues 144-157 are cytoplasmic; the sequence is SYFTRKYDEVRSRK. A helical membrane pass occupies residues 158 to 178; the sequence is LSAFKPFALMGLMGLFLLSQP. Over 179–183 the chain is Periplasmic; that stretch reads DLGST. 2 helical membrane-spanning segments follow: residues 184 to 204 and 205 to 225; these read VVLF…FWQF and VGLM…SAYR. Residues 226 to 285 are Periplasmic-facing; it reads LKRFTGFLDPFKDPYGTGFQLSNSLMAFGRGEWVGEGLGNSIQKLEYLPEAHTDFVMAVV. Residues 286–306 traverse the membrane as a helical segment; it reads GEEFGFLGILVIVILLGLLIF. Topologically, residues 307 to 323 are cytoplasmic; sequence RAMKIGRESLLLEQRFK. A helical transmembrane segment spans residues 324–344; that stretch reads GFFAFGISFWIFFQGFVNLGM. The Periplasmic portion of the chain corresponds to 345 to 355; the sequence is SLGLLPTKGLT. A helical transmembrane segment spans residues 356–376; sequence FPLISYGGSSLIIMSMTIGLL. Over 377-396 the chain is Cytoplasmic; sequence LRIDHENRLMRIGQARLRDD.

The protein belongs to the SEDS family. FtsW subfamily.

The protein resides in the cell inner membrane. The enzyme catalyses [GlcNAc-(1-&gt;4)-Mur2Ac(oyl-L-Ala-gamma-D-Glu-L-Lys-D-Ala-D-Ala)](n)-di-trans,octa-cis-undecaprenyl diphosphate + beta-D-GlcNAc-(1-&gt;4)-Mur2Ac(oyl-L-Ala-gamma-D-Glu-L-Lys-D-Ala-D-Ala)-di-trans,octa-cis-undecaprenyl diphosphate = [GlcNAc-(1-&gt;4)-Mur2Ac(oyl-L-Ala-gamma-D-Glu-L-Lys-D-Ala-D-Ala)](n+1)-di-trans,octa-cis-undecaprenyl diphosphate + di-trans,octa-cis-undecaprenyl diphosphate + H(+). It functions in the pathway cell wall biogenesis; peptidoglycan biosynthesis. In terms of biological role, peptidoglycan polymerase that is essential for cell division. This is Probable peptidoglycan glycosyltransferase FtsW from Pasteurella multocida (strain Pm70).